Consider the following 398-residue polypeptide: Na(+)/H(+) antiporter NhaA (398 aa).

11 helical membrane passes run 14–34 (AAGV…NWSV), 60–80 (LLLW…GLEV), 96–116 (MLPL…FLLF), 125–145 (VGWA…LTLL), 155–175 (VFLL…IALF), 179–199 (QIFW…AYLN), 214–234 (IVLW…GVIV), 263–283 (FLII…GIVL), 292–312 (LGIA…LSWL), 330–350 (IVAV…ITLL), and 362–382 (YAKL…YLAL).

This sequence belongs to the NhaA Na(+)/H(+) (TC 2.A.33) antiporter family.

The protein localises to the cell inner membrane. The catalysed reaction is Na(+)(in) + 2 H(+)(out) = Na(+)(out) + 2 H(+)(in). In terms of biological role, na(+)/H(+) antiporter that extrudes sodium in exchange for external protons. This Pectobacterium carotovorum subsp. carotovorum (strain PC1) protein is Na(+)/H(+) antiporter NhaA.